Reading from the N-terminus, the 466-residue chain is Cysteine--tRNA ligase (466 aa).

Residue Cys-28 coordinates Zn(2+). The short motif at 30–40 (PTVYNYIHIGN) is the 'HIGH' region element. Positions 208, 233, and 237 each coordinate Zn(2+). The 'KMSKS' region motif lies at 265 to 269 (KMSKS). Residue Lys-268 coordinates ATP.

The protein belongs to the class-I aminoacyl-tRNA synthetase family. As to quaternary structure, monomer. Requires Zn(2+) as cofactor.

The protein resides in the cytoplasm. It carries out the reaction tRNA(Cys) + L-cysteine + ATP = L-cysteinyl-tRNA(Cys) + AMP + diphosphate. The polypeptide is Cysteine--tRNA ligase (Staphylococcus haemolyticus (strain JCSC1435)).